A 188-amino-acid chain; its full sequence is Elongation factor P-like protein (188 aa).

It belongs to the elongation factor P family.

This is Elongation factor P-like protein from Xanthomonas oryzae pv. oryzae (strain MAFF 311018).